A 384-amino-acid polypeptide reads, in one-letter code: Dual-specificity RNA methyltransferase RlmN (384 aa).

The active-site Proton acceptor is the glutamate 105. The Radical SAM core domain maps to 111 to 350; it reads EDDRATLCVS…TIVRKTRGDD (240 aa). Residues cysteine 118 and cysteine 355 are joined by a disulfide bond. The [4Fe-4S] cluster site is built by cysteine 125, cysteine 129, and cysteine 132. S-adenosyl-L-methionine is bound by residues 179–180, serine 211, 233–235, and asparagine 312; these read GE and SLH. The active-site S-methylcysteine intermediate is cysteine 355.

The protein belongs to the radical SAM superfamily. RlmN family. [4Fe-4S] cluster serves as cofactor.

The protein localises to the cytoplasm. It catalyses the reaction adenosine(2503) in 23S rRNA + 2 reduced [2Fe-2S]-[ferredoxin] + 2 S-adenosyl-L-methionine = 2-methyladenosine(2503) in 23S rRNA + 5'-deoxyadenosine + L-methionine + 2 oxidized [2Fe-2S]-[ferredoxin] + S-adenosyl-L-homocysteine. The catalysed reaction is adenosine(37) in tRNA + 2 reduced [2Fe-2S]-[ferredoxin] + 2 S-adenosyl-L-methionine = 2-methyladenosine(37) in tRNA + 5'-deoxyadenosine + L-methionine + 2 oxidized [2Fe-2S]-[ferredoxin] + S-adenosyl-L-homocysteine. In terms of biological role, specifically methylates position 2 of adenine 2503 in 23S rRNA and position 2 of adenine 37 in tRNAs. m2A2503 modification seems to play a crucial role in the proofreading step occurring at the peptidyl transferase center and thus would serve to optimize ribosomal fidelity. The protein is Dual-specificity RNA methyltransferase RlmN of Escherichia coli O157:H7.